A 131-amino-acid chain; its full sequence is Small ribosomal subunit protein uS8 (131 aa).

Belongs to the universal ribosomal protein uS8 family. As to quaternary structure, part of the 30S ribosomal subunit. Contacts proteins S5 and S12.

One of the primary rRNA binding proteins, it binds directly to 16S rRNA central domain where it helps coordinate assembly of the platform of the 30S subunit. This Campylobacter jejuni subsp. doylei (strain ATCC BAA-1458 / RM4099 / 269.97) protein is Small ribosomal subunit protein uS8.